Reading from the N-terminus, the 418-residue chain is UDP-N-acetylglucosamine 1-carboxyvinyltransferase (418 aa).

Position 22 to 23 (22 to 23) interacts with phosphoenolpyruvate; that stretch reads KN. Position 91 (Arg-91) interacts with UDP-N-acetyl-alpha-D-glucosamine. The Proton donor role is filled by Cys-115. At Cys-115 the chain carries 2-(S-cysteinyl)pyruvic acid O-phosphothioketal. UDP-N-acetyl-alpha-D-glucosamine contacts are provided by residues 120–124, Asp-305, and Ile-327; that span reads RPVDL.

The protein belongs to the EPSP synthase family. MurA subfamily.

The protein resides in the cytoplasm. The enzyme catalyses phosphoenolpyruvate + UDP-N-acetyl-alpha-D-glucosamine = UDP-N-acetyl-3-O-(1-carboxyvinyl)-alpha-D-glucosamine + phosphate. It functions in the pathway cell wall biogenesis; peptidoglycan biosynthesis. Its function is as follows. Cell wall formation. Adds enolpyruvyl to UDP-N-acetylglucosamine. In Wigglesworthia glossinidia brevipalpis, this protein is UDP-N-acetylglucosamine 1-carboxyvinyltransferase.